The sequence spans 382 residues: uncharacterized protein (382 aa).

A run of 12 helical transmembrane segments spans residues 14–34 (GLLLLTLAIAVLNTLVPLWLA), 45–65 (MVSSSYFTGNLVGTLLTGYLI), 79–99 (LVFAAGCLGLGLMIGFWSWMA), 102–122 (FVAGVGCAMIWVVVESALMCS), 131–151 (LLAAYMMIYYVGTFLGQLLVS), 157–177 (LMNVLPWVTALILAGILPLLF), 204–224 (LGVNGCIISGIVLGSLYGLMP), 236–256 (NIGFWMAVLVSAGIVGQWPIG), 265–285 (LLVLRVQIFVVILGSIAMLTH), 289–309 (APALFILGAAGFTLYPVAMAW), 325–345 (ALLLSYTIGSLLGPSFTAMLM), and 349–369 (SDNLLFIMIASVSFIYLLMLL).

Belongs to the major facilitator superfamily. YcaD (TC 2.A.1.26) family.

It is found in the cell inner membrane. This is an uncharacterized protein from Escherichia fergusonii (strain ATCC 35469 / DSM 13698 / CCUG 18766 / IAM 14443 / JCM 21226 / LMG 7866 / NBRC 102419 / NCTC 12128 / CDC 0568-73).